Here is a 210-residue protein sequence, read N- to C-terminus: tRNA (guanine-N(7)-)-methyltransferase (210 aa).

4 residues coordinate S-adenosyl-L-methionine: glutamate 43, glutamate 68, aspartate 95, and aspartate 117. Aspartate 117 is a catalytic residue. Residues lysine 121, aspartate 153, and 190–193 (TEYE) contribute to the substrate site.

The protein belongs to the class I-like SAM-binding methyltransferase superfamily. TrmB family.

It catalyses the reaction guanosine(46) in tRNA + S-adenosyl-L-methionine = N(7)-methylguanosine(46) in tRNA + S-adenosyl-L-homocysteine. It participates in tRNA modification; N(7)-methylguanine-tRNA biosynthesis. Functionally, catalyzes the formation of N(7)-methylguanine at position 46 (m7G46) in tRNA. In Macrococcus caseolyticus (strain JCSC5402) (Macrococcoides caseolyticum), this protein is tRNA (guanine-N(7)-)-methyltransferase.